The chain runs to 24 residues: Coenzyme PQQ synthesis protein A (24 aa).

The segment at residues 16–20 (EVTMY) is a cross-link (pyrroloquinoline quinone (Glu-Tyr)).

Belongs to the PqqA family.

The protein operates within cofactor biosynthesis; pyrroloquinoline quinone biosynthesis. In terms of biological role, required for coenzyme pyrroloquinoline quinone (PQQ) biosynthesis. PQQ is probably formed by cross-linking a specific glutamate to a specific tyrosine residue and excising these residues from the peptide. In Pseudomonas fluorescens (strain Pf0-1), this protein is Coenzyme PQQ synthesis protein A.